A 266-amino-acid chain; its full sequence is Glucosamine-6-phosphate deaminase (266 aa).

The Proton acceptor; for enolization step role is filled by D72. D141 functions as the For ring-opening step in the catalytic mechanism. H143 (proton acceptor; for ring-opening step) is an active-site residue. E148 serves as the catalytic For ring-opening step.

This sequence belongs to the glucosamine/galactosamine-6-phosphate isomerase family. NagB subfamily. Homohexamer; trimer of disulfide-linked dimers.

The catalysed reaction is alpha-D-glucosamine 6-phosphate + H2O = beta-D-fructose 6-phosphate + NH4(+). It functions in the pathway amino-sugar metabolism; N-acetylneuraminate degradation; D-fructose 6-phosphate from N-acetylneuraminate: step 5/5. Allosterically activated by N-acetylglucosamine 6-phosphate (GlcNAc6P). Its function is as follows. Catalyzes the reversible isomerization-deamination of glucosamine 6-phosphate (GlcN6P) to form fructose 6-phosphate (Fru6P) and ammonium ion. The protein is Glucosamine-6-phosphate deaminase of Vibrio parahaemolyticus serotype O3:K6 (strain RIMD 2210633).